Reading from the N-terminus, the 589-residue chain is Kelch-like protein 25 (589 aa).

The region spanning 46–114 (TDVTLWAGDR…AYSSRIVINE (69 aa)) is the BTB domain. Residues 149–250 (CLGMMVLSDA…LPSDCLKNAV (102 aa)) enclose the BACK domain. Kelch repeat units follow at residues 296–340 (TLLI…AIGC), 341–388 (KVYV…ELEN), 389–444 (CLYV…SAKL), 446–492 (LFVF…VLGS), 493–538 (QIFI…ASGN), and 539–585 (KLYV…STWK).

In terms of assembly, component of the BCR(KLHL25) E3 ubiquitin ligase complex, at least composed of CUL3, KLHL25 and RBX1.

It functions in the pathway protein modification; protein ubiquitination. Substrate-specific adapter of a BCR (BTB-CUL3-RBX1) E3 ubiquitin ligase complex involved in various processes, such as translation homeostasis and lipid synthesis. The BCR(KLHL25) ubiquitin ligase complex acts by mediating ubiquitination of hypophosphorylated EIF4EBP1 (4E-BP1): ubiquitination and subsequent degradation of hypophosphorylated EIF4EBP1 (4E-BP1) probably serves as a homeostatic mechanism to maintain translation and prevent eIF4E inhibition when eIF4E levels are low. The BCR(KLHL25) complex does not target EIF4EBP1 (4E-BP1) when it is hyperphosphorylated or associated with eIF4E. The BCR(KLHL25) complex also acts as a regulator of lipid synthesis by mediating ubiquitination and degradation of ACLY, thereby inhibiting lipid synthesis. BCR(KLHL25)-mediated degradation of ACLY promotes fatty acid oxidation and is required for differentiation of inducible regulatory T (iTreg) cells. The sequence is that of Kelch-like protein 25 from Mus musculus (Mouse).